We begin with the raw amino-acid sequence, 100 residues long: Small ribosomal subunit protein bS6 (100 aa).

This sequence belongs to the bacterial ribosomal protein bS6 family.

Binds together with bS18 to 16S ribosomal RNA. The protein is Small ribosomal subunit protein bS6 of Tropheryma whipplei (strain Twist) (Whipple's bacillus).